A 324-amino-acid polypeptide reads, in one-letter code: Beta-ketoacyl-[acyl-carrier-protein] synthase III (324 aa).

Residues cysteine 112 and histidine 249 contribute to the active site. An ACP-binding region spans residues 250-254 (QANRR). Asparagine 279 is a catalytic residue.

This sequence belongs to the thiolase-like superfamily. FabH family. Homodimer.

The protein localises to the cytoplasm. It catalyses the reaction malonyl-[ACP] + acetyl-CoA + H(+) = 3-oxobutanoyl-[ACP] + CO2 + CoA. It functions in the pathway lipid metabolism; fatty acid biosynthesis. Its function is as follows. Catalyzes the condensation reaction of fatty acid synthesis by the addition to an acyl acceptor of two carbons from malonyl-ACP. Catalyzes the first condensation reaction which initiates fatty acid synthesis and may therefore play a role in governing the total rate of fatty acid production. Possesses both acetoacetyl-ACP synthase and acetyl transacylase activities. Its substrate specificity determines the biosynthesis of branched-chain and/or straight-chain of fatty acids. The chain is Beta-ketoacyl-[acyl-carrier-protein] synthase III from Streptococcus pyogenes serotype M49 (strain NZ131).